Consider the following 580-residue polypeptide: Potassium-transporting ATPase potassium-binding subunit (580 aa).

10 consecutive transmembrane segments (helical) span residues 3–23 (ASGALQPALYLAVLIGLSVPL), 65–85 (DYAFAVLAFNLAGLLVLYALQ), 136–156 (GLGVQNFVSAATGMAVLVALI), 179–199 (LYILLPLSLLLAVLLVSQGVV), 263–283 (LSNFLEMLAILLIPAALCHTF), 293–313 (GWAVLAAMTAIFAVLLVACVA), 399–419 (GLYGMLMFVVIAVFVAGLMVG), 436–456 (MASLVVLFPAITVLVGTAIAV), 504–524 (AIGVAMLVGRYAVIVPVLALA), and 546–566 (LFVGLLTGTVLLVGALTFVPA).

Belongs to the KdpA family. The system is composed of three essential subunits: KdpA, KdpB and KdpC.

Its subcellular location is the cell inner membrane. Part of the high-affinity ATP-driven potassium transport (or Kdp) system, which catalyzes the hydrolysis of ATP coupled with the electrogenic transport of potassium into the cytoplasm. This subunit binds the periplasmic potassium ions and delivers the ions to the membrane domain of KdpB through an intramembrane tunnel. This is Potassium-transporting ATPase potassium-binding subunit from Sorangium cellulosum (strain So ce56) (Polyangium cellulosum (strain So ce56)).